The chain runs to 509 residues: Autophagy-related protein 16 (509 aa).

WD repeat units follow at residues 223–262 (AHEG…LIKS), 265–304 (GSLG…VRHT), 307–347 (GHTD…CTNT), 349–388 (LFTS…LLSE), 391–430 (GHSS…ICGT), 437–478 (RLAS…SILK), and 480–509 (QTSP…CTWT).

Belongs to the WD repeat ATG16 family.

In terms of biological role, may play a role in autophagy. The chain is Autophagy-related protein 16 from Arabidopsis thaliana (Mouse-ear cress).